Here is a 219-residue protein sequence, read N- to C-terminus: MILTIDEVLTAEELAEMKDVLATADFVDGKTTAGWHAKLVKNNTQLAGKAACSMDLKERVKSALLRHPLFKVAIQPRSIHTLLFSRYQEGMSYGDHVDNAFMGGARSDVSFTLFLNAPEDYTGGELCVELADGVHTYKLAAGSAIAYPSSTIHRVETVTSGTRLVAVGWVQSLVRDVQQRELLFDLDTARRSLFATHGKTPEFDLISKSHANLLRQWAE.

The Fe2OG dioxygenase domain occupies 78–172; that stretch reads SIHTLLFSRY…RLVAVGWVQS (95 aa). Positions 96, 98, and 153 each coordinate Fe cation. Arginine 163 provides a ligand contact to 2-oxoglutarate.

It depends on Fe(2+) as a cofactor. Requires L-ascorbate as cofactor.

This Acaryochloris marina (strain MBIC 11017) protein is PKHD-type hydroxylase AM1_3707.